Consider the following 567-residue polypeptide: Wee1-like protein kinase 2 (567 aa).

Basic and acidic residues-rich tracts occupy residues Met-1–Gln-12 and Glu-26–Glu-36. Disordered regions lie at residues Met-1–Ser-103 and Arg-170–Val-191. Ser-77 carries the post-translational modification Phosphoserine. The Nuclear localization signal motif lies at Lys-174–Lys-176. Residues Phe-215–Leu-494 enclose the Protein kinase domain. Residues Ile-221–Val-229 and Lys-244 each bind ATP. Residues Lys-318–Tyr-332 carry the Nuclear export signal motif. The Proton acceptor role is filled by Asp-342. Asn-347 and Asp-384 together coordinate Mg(2+). Positions Ala-497–Gln-523 form a coiled coil. Residues Gln-502–Pro-567 are disordered. The span at Glu-507–Glu-520 shows a compositional bias: basic and acidic residues. Over residues Ala-555–Pro-567 the composition is skewed to polar residues.

The protein belongs to the protein kinase superfamily. Ser/Thr protein kinase family. WEE1 subfamily. Post-translationally, phosphorylation leads to increase its activity.

The protein resides in the nucleus. It catalyses the reaction L-tyrosyl-[protein] + ATP = O-phospho-L-tyrosyl-[protein] + ADP + H(+). Oocyte-specific protein tyrosine kinase that phosphorylates and inhibits CDK1 and acts as a key regulator of meiosis during both prophase I and metaphase II. Required to maintain meiotic arrest in oocytes during the germinal vesicle (GV) stage, a long period of quiescence at dictyate prophase I, by phosphorylating CDK1 at 'Tyr-15', leading to inhibit CDK1 activity and prevent meiotic reentry. Also required for metaphase II exit during egg activation by phosphorylating CDK1 at 'Tyr-15', to ensure exit from meiosis in oocytes and promote pronuclear formation. The sequence is that of Wee1-like protein kinase 2 (WEE2) from Canis lupus familiaris (Dog).